A 626-amino-acid polypeptide reads, in one-letter code: Chaperone protein DnaK (626 aa).

Thr-175 bears the Phosphothreonine; by autocatalysis mark. Disordered regions lie at residues 469–488 (DKGT…GLPK), 498–517 (AEAH…TRNQ), and 583–626 (AQQG…KDNK). Positions 498–516 (AEAHEAEDKKRKEDAETRN) are enriched in basic and acidic residues. The span at 609–626 (SDDDVVDAEVVDDDKDNK) shows a compositional bias: acidic residues.

This sequence belongs to the heat shock protein 70 family.

Acts as a chaperone. The sequence is that of Chaperone protein DnaK from Bifidobacterium adolescentis (strain ATCC 15703 / DSM 20083 / NCTC 11814 / E194a).